The sequence spans 573 residues: Sulfite reductase [NADPH] hemoprotein beta-component (573 aa).

Positions 438, 444, 483, and 487 each coordinate [4Fe-4S] cluster. Cys487 lines the siroheme pocket.

This sequence belongs to the nitrite and sulfite reductase 4Fe-4S domain family. Alpha(8)-beta(8). The alpha component is a flavoprotein, the beta component is a hemoprotein. Requires siroheme as cofactor. It depends on [4Fe-4S] cluster as a cofactor.

The catalysed reaction is hydrogen sulfide + 3 NADP(+) + 3 H2O = sulfite + 3 NADPH + 4 H(+). It participates in sulfur metabolism; hydrogen sulfide biosynthesis; hydrogen sulfide from sulfite (NADPH route): step 1/1. In terms of biological role, component of the sulfite reductase complex that catalyzes the 6-electron reduction of sulfite to sulfide. This is one of several activities required for the biosynthesis of L-cysteine from sulfate. The sequence is that of Sulfite reductase [NADPH] hemoprotein beta-component from Nitrosomonas europaea (strain ATCC 19718 / CIP 103999 / KCTC 2705 / NBRC 14298).